The sequence spans 106 residues: Urease subunit beta (106 aa).

This sequence belongs to the urease beta subunit family. Heterotrimer of UreA (gamma), UreB (beta) and UreC (alpha) subunits. Three heterotrimers associate to form the active enzyme.

It is found in the cytoplasm. It catalyses the reaction urea + 2 H2O + H(+) = hydrogencarbonate + 2 NH4(+). It participates in nitrogen metabolism; urea degradation; CO(2) and NH(3) from urea (urease route): step 1/1. This Synechococcus sp. (strain WH7805) protein is Urease subunit beta.